Reading from the N-terminus, the 868-residue chain is Transcription factor pynR (868 aa).

Positions 11 to 37 form a DNA-binding region, zn(2)-C6 fungal-type; that stretch reads CTFCRTRKIACSGERICNACRSRSIEC. Disordered regions lie at residues 51 to 88, 662 to 683, 715 to 761, and 829 to 868; these read NKTT…TSAV, LSGS…LDLS, SGIP…ASDL, and GMGE…GMSN. Composition is skewed to low complexity over residues 663 to 683 and 715 to 727; these read SGSR…LDLS and SGIP…SISH.

It is found in the nucleus. Functionally, transcription factor that regulates the expression of the gene cluster that mediates the biosynthesis of pyranonigrins, a family of antioxidative compounds. The chain is Transcription factor pynR from Aspergillus niger (strain ATCC MYA-4892 / CBS 513.88 / FGSC A1513).